Here is a 405-residue protein sequence, read N- to C-terminus: Magnesium-protoporphyrin IX monomethyl ester [oxidative] cyclase, chloroplastic (405 aa).

The transit peptide at 1 to 43 directs the protein to the chloroplast; it reads MATEMALVKPISKFSTSSPIFSNSRYGKFTTVRMSSTSQSTTK.

It belongs to the AcsF family. Fe cation is required as a cofactor.

The protein localises to the plastid. It localises to the chloroplast. It carries out the reaction Mg-protoporphyrin IX 13-monomethyl ester + 3 NADPH + 3 O2 + 2 H(+) = 3,8-divinyl protochlorophyllide a + 3 NADP(+) + 5 H2O. It participates in porphyrin-containing compound metabolism; chlorophyll biosynthesis. Catalyzes the formation of the isocyclic ring in chlorophyll biosynthesis. Mediates the cyclase reaction, which results in the formation of divinylprotochlorophyllide (Pchlide) characteristic of all chlorophylls from magnesium-protoporphyrin IX 13-monomethyl ester (MgPMME). This Gossypium hirsutum (Upland cotton) protein is Magnesium-protoporphyrin IX monomethyl ester [oxidative] cyclase, chloroplastic (CRD1).